A 427-amino-acid chain; its full sequence is Glutamate-1-semialdehyde 2,1-aminomutase (427 aa).

An N6-(pyridoxal phosphate)lysine modification is found at Lys-265.

Belongs to the class-III pyridoxal-phosphate-dependent aminotransferase family. HemL subfamily. In terms of assembly, homodimer. The cofactor is pyridoxal 5'-phosphate.

It is found in the cytoplasm. It carries out the reaction (S)-4-amino-5-oxopentanoate = 5-aminolevulinate. Its pathway is porphyrin-containing compound metabolism; protoporphyrin-IX biosynthesis; 5-aminolevulinate from L-glutamyl-tRNA(Glu): step 2/2. This Pseudomonas syringae pv. tomato (strain ATCC BAA-871 / DC3000) protein is Glutamate-1-semialdehyde 2,1-aminomutase.